Consider the following 257-residue polypeptide: MYSVCDVVRDAVAQSHLCACPNDKLPQCKGVTKAPPKCSVFHVAKLQDTKFKWKYTLDPLKAQKLSQIDKDIEKDAITLKLIYGIELSPEDLEWWKMQRCLINKKTGAKGGQFANKYLERQDLELLGYSPTPIIGGDFMFTALPDKVLRTIPVAWDRFLNPAMMIFFLIILLCVILGIFYVLVRNTLRRKQKSKQHQMEIKRFIKEKEQDPYIHTSFESWPADPNKKWKDLIPMYEAQGYCMADYRKKLGMPPGPNC.

The next 2 membrane-spanning stretches (helical) occupy residues leucine 123–leucine 143 and methionine 163–valine 183.

Belongs to the asfivirus C257R family.

It localises to the host membrane. The protein resides in the virion. The polypeptide is Transmembrane protein C257L (African swine fever virus (strain Badajoz 1971 Vero-adapted) (Ba71V)).